Consider the following 154-residue polypeptide: Aspartate carbamoyltransferase regulatory chain (154 aa).

The Zn(2+) site is built by Cys-109, Cys-114, Cys-138, and Cys-141.

This sequence belongs to the PyrI family. Contains catalytic and regulatory chains. Requires Zn(2+) as cofactor.

Its function is as follows. Involved in allosteric regulation of aspartate carbamoyltransferase. This Sodalis glossinidius (strain morsitans) protein is Aspartate carbamoyltransferase regulatory chain.